The chain runs to 152 residues: Histone H2B.1 (152 aa).

Residues 1-23 (MAPKAEKKPAEKKPAAGEEKSAE) show a composition bias toward basic and acidic residues. The disordered stretch occupies residues 1 to 60 (MAPKAEKKPAEKKPAAGEEKSAEKAPAGKKPKAEKRLPASKASSKEGGAGDKKGRKKAKK). An N6-acetyllysine mark is found at K7 and K35. A Glycyl lysine isopeptide (Lys-Gly) (interchain with G-Cter in ubiquitin) cross-link involves residue K148.

It belongs to the histone H2B family. In terms of assembly, the nucleosome is a histone octamer containing two molecules each of H2A, H2B, H3 and H4 assembled in one H3-H4 heterotetramer and two H2A-H2B heterodimers. The octamer wraps approximately 147 bp of DNA. In terms of processing, can be acetylated to form H2BK6ac and H2BK33ac. Monoubiquitinated by BRE1 to form H2BK143ub1 and deubiquitinated by UBP26. Required for heterochromatic histone H3 di- and trimethylation at H3K4me. May give a specific tag for epigenetic transcriptional activation.

Its subcellular location is the nucleus. The protein resides in the chromosome. Core component of nucleosome. Nucleosomes wrap and compact DNA into chromatin, limiting DNA accessibility to the cellular machineries which require DNA as a template. Histones thereby play a central role in transcription regulation, DNA repair, DNA replication and chromosomal stability. DNA accessibility is regulated via a complex set of post-translational modifications of histones, also called histone code, and nucleosome remodeling. The chain is Histone H2B.1 from Oryza sativa subsp. indica (Rice).